Here is a 191-residue protein sequence, read N- to C-terminus: Protein G1-like1 (191 aa).

Residues 1–29 form a disordered region; sequence MDMIGMASPAESPGGGGTARPSRYESQKR. The region spanning 23–150 is the ALOG domain; the sequence is RYESQKRRDW…ARGIAYEKKR (128 aa). Positions 148-152 match the Nuclear localization signal motif; the sequence is KKRRK. A coiled-coil region spans residues 152–179; that stretch reads KRAAASHTKQKQQQQQLVEQAAAAAEAH.

Belongs to the plant homeotic and developmental regulators ALOG protein family.

Its subcellular location is the nucleus. Its function is as follows. Probable transcription regulator that acts as a developmental regulator by promoting cell growth in response to light. The protein is Protein G1-like1 of Oryza sativa subsp. indica (Rice).